Consider the following 131-residue polypeptide: Flagellar assembly factor FliW (131 aa).

Belongs to the FliW family. In terms of assembly, interacts with translational regulator CsrA and flagellin(s).

It is found in the cytoplasm. In terms of biological role, acts as an anti-CsrA protein, binds CsrA and prevents it from repressing translation of its target genes, one of which is flagellin. Binds to flagellin and participates in the assembly of the flagellum. This Campylobacter lari (strain RM2100 / D67 / ATCC BAA-1060) protein is Flagellar assembly factor FliW.